A 343-amino-acid polypeptide reads, in one-letter code: 4-hydroxy-2-oxovalerate aldolase (343 aa).

The Pyruvate carboxyltransferase domain maps to 4 to 254 (PRLTDTTLRD…NPGLDVFSLM (251 aa)). Residue 12–13 (RD) participates in substrate binding. Asp13 lines the Mn(2+) pocket. Residue His16 is the Proton acceptor of the active site. Positions 166 and 193 each coordinate substrate. His193 and His195 together coordinate Mn(2+). Residue Tyr284 participates in substrate binding.

This sequence belongs to the 4-hydroxy-2-oxovalerate aldolase family.

The enzyme catalyses (S)-4-hydroxy-2-oxopentanoate = acetaldehyde + pyruvate. This chain is 4-hydroxy-2-oxovalerate aldolase, found in Chloroflexus aurantiacus (strain ATCC 29364 / DSM 637 / Y-400-fl).